The sequence spans 129 residues: NADPH-dependent 7-cyano-7-deazaguanine reductase (129 aa).

Cysteine 43 (thioimide intermediate) is an active-site residue. Aspartate 50 functions as the Proton donor in the catalytic mechanism. Substrate contacts are provided by residues 65–67 and 84–85; these read VEL and HE.

This sequence belongs to the GTP cyclohydrolase I family. QueF type 1 subfamily.

Its subcellular location is the cytoplasm. It carries out the reaction 7-aminomethyl-7-carbaguanine + 2 NADP(+) = 7-cyano-7-deazaguanine + 2 NADPH + 3 H(+). It functions in the pathway tRNA modification; tRNA-queuosine biosynthesis. Functionally, catalyzes the NADPH-dependent reduction of 7-cyano-7-deazaguanine (preQ0) to 7-aminomethyl-7-deazaguanine (preQ1). The protein is NADPH-dependent 7-cyano-7-deazaguanine reductase of Aquifex aeolicus (strain VF5).